Here is an 882-residue protein sequence, read N- to C-terminus: Valine--tRNA ligase (882 aa).

The short motif at 42-52 is the 'HIGH' region element; sequence PNVTGKLHLGH. A 'KMSKS' region motif is present at residues 522–526; it reads KMSKS. K525 lines the ATP pocket. A coiled-coil region spans residues 849–873; that stretch reads KIEIEKKKYESYCKQYKKLLESKNN.

This sequence belongs to the class-I aminoacyl-tRNA synthetase family. ValS type 1 subfamily. In terms of assembly, monomer.

The protein resides in the cytoplasm. It catalyses the reaction tRNA(Val) + L-valine + ATP = L-valyl-tRNA(Val) + AMP + diphosphate. Catalyzes the attachment of valine to tRNA(Val). As ValRS can inadvertently accommodate and process structurally similar amino acids such as threonine, to avoid such errors, it has a 'posttransfer' editing activity that hydrolyzes mischarged Thr-tRNA(Val) in a tRNA-dependent manner. In Onion yellows phytoplasma (strain OY-M), this protein is Valine--tRNA ligase.